Here is an 85-residue protein sequence, read N- to C-terminus: CRISPR-associated endoribonuclease Cas2 2 (85 aa).

Asp8 contacts Mg(2+).

This sequence belongs to the CRISPR-associated endoribonuclease Cas2 protein family. In terms of assembly, homodimer, forms a heterotetramer with a Cas1 homodimer. Requires Mg(2+) as cofactor.

CRISPR (clustered regularly interspaced short palindromic repeat), is an adaptive immune system that provides protection against mobile genetic elements (viruses, transposable elements and conjugative plasmids). CRISPR clusters contain sequences complementary to antecedent mobile elements and target invading nucleic acids. CRISPR clusters are transcribed and processed into CRISPR RNA (crRNA). Functions as a ssRNA-specific endoribonuclease. Involved in the integration of spacer DNA into the CRISPR cassette. This is CRISPR-associated endoribonuclease Cas2 2 from Chloroflexus aurantiacus (strain ATCC 29366 / DSM 635 / J-10-fl).